We begin with the raw amino-acid sequence, 90 residues long: Chaplin-G (90 aa).

An N-terminal signal peptide occupies residues 1-27 (MSRIAKAAGVALGTGAVVLSGTGMAMA). The 41-residue stretch at 38 to 78 (SPGVLSGNVVQVPVHVPVNLCGNTIDVIGLLNPAFGNACEN) folds into the Chaplin domain. Cysteine 58 and cysteine 76 are oxidised to a cystine.

Belongs to the chaplin family. Short chaplin subfamily.

Its subcellular location is the cell surface. It is found in the secreted. It localises to the cell wall. Functionally, one of 8 partially redundant surface-active proteins required for efficient formation of aerial mycelium; the short chaplins assemble into a hydrophobic, amyloidal fibrillar surface layer that envelopes and protects aerial hyphae and spores, presumably anchored to the long chaplins. Chaplins have an overlapping function with the surface-active SapB peptide; chaplins are essential on minimal medium while on rich medium both chaplins and SapB are required for efficient aerial hyphae formation. Chaplins are also involved in cell attachment to a hydrophobic surface. Forms amyloid fibrils in vitro probably composed of stacked beta-sheets, at low extracellular concentrations individually restores the ability to form aerial hyphae to a chaplin-deficient strain. A small chaplin extract (ChpD, ChpE, ChpF, ChpG and ChpH) self-assembles into 2 different amyloids; small fibrils at the air-water interface form an amphipathic membrane that resembles spore-surface structures involved in aerial hyphae formation, and hydrophilic fibrils in solution that resemble the fibers that attach cells to a hydrophobic surface. At the air-water interface the hydrophilic surface is in contact with water (probably equivalent to the peptidoglycan layer), while the hydrophobic face is exposed to the air, making the surface of the aerial hyphae hydrophobic. A small chaplin extract applied to a chaplin-deficient strain restores aerial hyphae formation. The small chaplin extract forms an amyloid-like structure similar to that seen on the surface of cells without rodlets (rdlA-rdlB deletions), and is highly surface active, reducing surface tension from 72 to 26 mJ/m(2), which probably allows escape of hyphae from an aqueous environment into air. ChpF and ChpG are sufficient to restore the rodlet layer and hydrophobicity to a strain deleted for the other 6 chaplin genes. The sequence is that of Chaplin-G from Streptomyces coelicolor (strain ATCC BAA-471 / A3(2) / M145).